Here is a 132-residue protein sequence, read N- to C-terminus: Small ribosomal subunit protein uS8 (132 aa).

This sequence belongs to the universal ribosomal protein uS8 family. Part of the 30S ribosomal subunit. Contacts proteins S5 and S12.

Functionally, one of the primary rRNA binding proteins, it binds directly to 16S rRNA central domain where it helps coordinate assembly of the platform of the 30S subunit. The polypeptide is Small ribosomal subunit protein uS8 (Geobacter sulfurreducens (strain ATCC 51573 / DSM 12127 / PCA)).